Consider the following 187-residue polypeptide: MITMKDIIREGNPTLRAVAEEVPVPITEEDRQLGEDMLTFLKNSQDPVKAEELQLRGGVGLAAPQLDISKRIIAVHVPSNDPENETPSLSTVMYNPKILSHSVQDVCLGEGEGCLSVDRDVPGYVVRHNKITVSYFDMAGEKHKVRLKNYEAIVVQHEIDHINGIMFYDHINKENPFALKEGVLVIE.

Positions 114 and 157 each coordinate Fe cation. Glu-158 is a catalytic residue. His-161 is a binding site for Fe cation.

This sequence belongs to the polypeptide deformylase family. It depends on Fe(2+) as a cofactor.

The catalysed reaction is N-terminal N-formyl-L-methionyl-[peptide] + H2O = N-terminal L-methionyl-[peptide] + formate. In terms of biological role, removes the formyl group from the N-terminal Met of newly synthesized proteins. Requires at least a dipeptide for an efficient rate of reaction. N-terminal L-methionine is a prerequisite for activity but the enzyme has broad specificity at other positions. This chain is Peptide deformylase, found in Enterococcus faecalis (strain ATCC 700802 / V583).